Consider the following 130-residue polypeptide: Small ribosomal subunit protein uS8 (130 aa).

This sequence belongs to the universal ribosomal protein uS8 family. Part of the 30S ribosomal subunit.

Its function is as follows. One of the primary rRNA binding proteins, it binds directly to 16S rRNA central domain where it helps coordinate assembly of the platform of the 30S subunit. This Methanococcoides burtonii (strain DSM 6242 / NBRC 107633 / OCM 468 / ACE-M) protein is Small ribosomal subunit protein uS8.